Consider the following 424-residue polypeptide: Translation initiation factor 2 subunit gamma (424 aa).

Residues 23–220 form the tr-type G domain; sequence LPEVNIGLVG…AIEETIPTPE (198 aa). Residues 32–39 are G1; that stretch reads GHVDHGKT. Mg(2+)-binding residues include aspartate 35, threonine 39, glycine 60, and serine 62. A GTP-binding site is contributed by 35–40; it reads DHGKTT. The interval 60 to 64 is G2; the sequence is GISIK. The G3 stretch occupies residues 107-110; the sequence is DSPG. GTP is bound by residues 163 to 166 and 198 to 200; these read NKID and SAQ. The interval 163-166 is G4; it reads NKID. The G5 stretch occupies residues 198-200; sequence SAQ.

Belongs to the TRAFAC class translation factor GTPase superfamily. Classic translation factor GTPase family. EIF2G subfamily. Heterotrimer composed of an alpha, a beta and a gamma chain. Mg(2+) is required as a cofactor.

It catalyses the reaction GTP + H2O = GDP + phosphate + H(+). Functionally, eIF-2 functions in the early steps of protein synthesis by forming a ternary complex with GTP and initiator tRNA. The chain is Translation initiation factor 2 subunit gamma from Archaeoglobus fulgidus (strain ATCC 49558 / DSM 4304 / JCM 9628 / NBRC 100126 / VC-16).